Here is a 178-residue protein sequence, read N- to C-terminus: CASP-like protein 5B1 (178 aa).

The Cytoplasmic portion of the chain corresponds to 1 to 37 (MDASNPIVHPIGDHHAVDLEEGPLIVTMKELPGMPGT). A helical membrane pass occupies residues 38-58 (IGGLALRVGQFLFAAAAIVIM). Residues 59-69 (VTGDEFTNYTA) are Extracellular-facing. The N-linked (GlcNAc...) asparagine glycan is linked to asparagine 66. Residues 70 to 90 (FCYLVAAMSLQFLWSFMLAIL) traverse the membrane as a helical segment. At 91-104 (DTYALLIKRGLRNS) the chain is on the cytoplasmic side. The helical transmembrane segment at 105–125 (VLLSLFVVGDWVTATLSLAAA) threads the bilayer. Residues 126–154 (CSTAGVTVLFDNDLNYCGQMHCHRYQLSA) are Extracellular-facing. The chain crosses the membrane as a helical span at residues 155 to 175 (AMAFLSWLLIGMSSLLTFWLW). The Cytoplasmic segment spans residues 176–178 (ASE).

It belongs to the Casparian strip membrane proteins (CASP) family. As to quaternary structure, homodimer and heterodimers.

It localises to the cell membrane. The polypeptide is CASP-like protein 5B1 (Ginkgo biloba (Ginkgo)).